A 426-amino-acid polypeptide reads, in one-letter code: Glutamate-1-semialdehyde 2,1-aminomutase (426 aa).

Lysine 265 is modified (N6-(pyridoxal phosphate)lysine).

The protein belongs to the class-III pyridoxal-phosphate-dependent aminotransferase family. HemL subfamily. Homodimer. The cofactor is pyridoxal 5'-phosphate.

The protein localises to the cytoplasm. It carries out the reaction (S)-4-amino-5-oxopentanoate = 5-aminolevulinate. Its pathway is porphyrin-containing compound metabolism; protoporphyrin-IX biosynthesis; 5-aminolevulinate from L-glutamyl-tRNA(Glu): step 2/2. In Escherichia coli (strain K12 / DH10B), this protein is Glutamate-1-semialdehyde 2,1-aminomutase.